Reading from the N-terminus, the 165-residue chain is Small ribosomal subunit protein uS5 (165 aa).

An S5 DRBM domain is found at 10–73; the sequence is LVEKLVSVDR…EAAKRNMITV (64 aa).

The protein belongs to the universal ribosomal protein uS5 family. Part of the 30S ribosomal subunit. Contacts proteins S4 and S8.

In terms of biological role, with S4 and S12 plays an important role in translational accuracy. Functionally, located at the back of the 30S subunit body where it stabilizes the conformation of the head with respect to the body. This Psychrobacter sp. (strain PRwf-1) protein is Small ribosomal subunit protein uS5.